Here is a 582-residue protein sequence, read N- to C-terminus: La-related protein 7 (582 aa).

At methionine 1 the chain carries N-acetylmethionine. The tract at residues 1 to 27 is disordered; sequence METESGNQEKVMEEESTEKKKEVEKKK. Residues 10-25 show a composition bias toward basic and acidic residues; sequence KVMEEESTEKKKEVEK. Residues 28-122 enclose the HTH La-type RNA-binding domain; it reads RSRVKQVLAD…KPLGERPKDE (95 aa). The RRM domain maps to 125-203; it reads RTVYVELLPK…PRKPGIFPKT (79 aa). Disordered regions lie at residues 188–368 and 410–442; these read NPPE…ERHK and KSES…RTQE. Residues 219–228 show a composition bias toward basic residues; that stretch reads KKKKKKKGRM. Positions 229-240 are enriched in basic and acidic residues; it reads KKEDNIQAKEEN. A Glycyl lysine isopeptide (Lys-Gly) (interchain with G-Cter in SUMO2) cross-link involves residue lysine 237. Threonine 257 carries the post-translational modification Phosphothreonine. Residues serine 258, serine 261, serine 273, serine 298, serine 299, and serine 300 each carry the phosphoserine modification. The segment covering 316-335 has biased composition (basic and acidic residues); the sequence is IQKDIIKEASEASKENRDIE. Phosphoserine is present on serine 337. Threonine 338 is modified (phosphothreonine). Serine 351 carries the phosphoserine modification. Residues 354–367 show a composition bias toward basic residues; sequence KTKRKHKKKHKERH. A Glycyl lysine isopeptide (Lys-Gly) (interchain with G-Cter in SUMO2) cross-link involves residue lysine 410. Residues 428 to 442 are compositionally biased toward basic and acidic residues; sequence KNEKTANREECRTQE. A xRRM domain is found at 450-563; the sequence is QFVSGVIVKI…TEKLITKAEK (114 aa).

This sequence belongs to the LARP7 family. In terms of assembly, core component of the 7SK RNP complex, at least composed of 7SK RNA, LARP7, MEPCE, HEXIM1 (or HEXIM2) and P-TEFb (composed of CDK9 and CCNT1/cyclin-T1). Interacts with METTL16. Interacts with RBM7; upon genotoxic stress this interaction is enhanced, triggering the release of inactive P-TEFb complex from the core, yielding to P-TEFb complex activation. Associates with box C/D small nucleolar ribonucleoprotein (snoRNP) complexes.

Its subcellular location is the nucleus. It is found in the nucleoplasm. RNA-binding protein that specifically binds distinct small nuclear RNA (snRNAs) and regulates their processing and function. Specifically binds the 7SK snRNA (7SK RNA) and acts as a core component of the 7SK ribonucleoprotein (RNP) complex, thereby acting as a negative regulator of transcription elongation by RNA polymerase II. The 7SK RNP complex sequesters the positive transcription elongation factor b (P-TEFb) in a large inactive 7SK RNP complex preventing RNA polymerase II phosphorylation and subsequent transcriptional elongation. The 7SK RNP complex also promotes snRNA gene transcription by RNA polymerase II via interaction with the little elongation complex (LEC). LARP7 specifically binds to the highly conserved 3'-terminal U-rich stretch of 7SK RNA; on stimulation, remains associated with 7SK RNA, whereas P-TEFb is released from the complex. LARP7 also acts as a regulator of mRNA splicing fidelity by promoting U6 snRNA processing. Specifically binds U6 snRNAs and associates with a subset of box C/D RNP complexes: promotes U6 snRNA 2'-O-methylation by facilitating U6 snRNA loading into box C/D RNP complexes. U6 snRNA 2'-O-methylation is required for mRNA splicing fidelity. Binds U6 snRNAs with a 5'-CAGGG-3' sequence motif. U6 snRNA processing is required for spermatogenesis. The protein is La-related protein 7 of Homo sapiens (Human).